We begin with the raw amino-acid sequence, 475 residues long: Sulfate adenylyltransferase subunit 1 (475 aa).

Residues 25–239 (KSLLRFLTCG…EVLETVEIQR (215 aa)) enclose the tr-type G domain. The interval 34-41 (GSVDDGKS) is G1. 34–41 (GSVDDGKS) contacts GTP. The interval 92-96 (GITID) is G2. Positions 113-116 (DTPG) are G3. Residues 113-117 (DTPGH) and 168-171 (NKMD) each bind GTP. The interval 168 to 171 (NKMD) is G4. The segment at 206-208 (SAL) is G5.

It belongs to the TRAFAC class translation factor GTPase superfamily. Classic translation factor GTPase family. CysN/NodQ subfamily. As to quaternary structure, heterodimer composed of CysD, the smaller subunit, and CysN.

It carries out the reaction sulfate + ATP + H(+) = adenosine 5'-phosphosulfate + diphosphate. Its pathway is sulfur metabolism; hydrogen sulfide biosynthesis; sulfite from sulfate: step 1/3. With CysD forms the ATP sulfurylase (ATPS) that catalyzes the adenylation of sulfate producing adenosine 5'-phosphosulfate (APS) and diphosphate, the first enzymatic step in sulfur assimilation pathway. APS synthesis involves the formation of a high-energy phosphoric-sulfuric acid anhydride bond driven by GTP hydrolysis by CysN coupled to ATP hydrolysis by CysD. This Escherichia coli O157:H7 protein is Sulfate adenylyltransferase subunit 1.